The chain runs to 508 residues: N-acetyl-D-hexosamine oxidase (508 aa).

Residues 26–203 (TDAQAAGRIA…TAYTFARLPE (178 aa)) enclose the FAD-binding PCMH-type domain. Positions 64–123 (HCYEDFVSNNPDGAIVDLSLLNAPEVRADGTVRIPAGTQNWNGYLELYKRHNLTLPGGSC) form a cross-link, 6-(S-cysteinyl)-8alpha-(pros-histidyl)-FAD (His-Cys).

It belongs to the oxygen-dependent FAD-linked oxidoreductase family. FAD serves as cofactor.

The enzyme catalyses N-acetyl-D-glucosamine + O2 + H2O = N-acetyl-D-glucosaminate + H2O2 + H(+). It catalyses the reaction N-acetyl-D-galactosamine + O2 + H2O = N-acetyl-D-galactosaminate + H2O2 + H(+). It carries out the reaction N-acetyl-D-glucosamine + O2 = N-acetyl-D-glucosamino-1,5-lactone + H2O2. The catalysed reaction is N-acetyl-D-galactosamine + O2 = N-acetyl-D-galactosamino-1,5-lactone + H2O2. In terms of biological role, catalyzes the oxidation of a range of monosaccharides in vitro, displaying the highest activity with N-acetylglucosamine (GlcNAc) and N-acetylgalactosamine (GalNAc), with a reduction of O2 to H2O2. Acts upon the C1 carbon of the GlcNAc or GalNAc molecule, producing the corresponding lactone, which can spontaneously hydrolyze. Its biological function is unclear, but its main function might be connected to extracellular production of hydrogen peroxide to compete with other organisms through oxidative stress, or support the action of peroxidases and peroxygenases. The sequence is that of N-acetyl-D-hexosamine oxidase from Ralstonia solanacearum (strain UW551).